A 306-amino-acid chain; its full sequence is MATH domain and coiled-coil domain-containing protein At3g29580 (306 aa).

The MATH domain occupies 6-132 (DNKFTWVIKN…NGEIKIVVEF (127 aa)). Residues 253–298 (FKLDWLEKKLNEVLEKKEKEESYETRMREIEEEMKDLKAKALDVGA) are a coiled coil.

The chain is MATH domain and coiled-coil domain-containing protein At3g29580 from Arabidopsis thaliana (Mouse-ear cress).